A 117-amino-acid chain; its full sequence is Early E3 13.3 kDa protein (117 aa).

In Canine adenovirus serotype 1 (strain Glaxo) (CAdV-1), this protein is Early E3 13.3 kDa protein.